The sequence spans 50 residues: Large ribosomal subunit protein bL33 (50 aa).

The protein belongs to the bacterial ribosomal protein bL33 family.

This is Large ribosomal subunit protein bL33 from Sulfurimonas denitrificans (strain ATCC 33889 / DSM 1251) (Thiomicrospira denitrificans (strain ATCC 33889 / DSM 1251)).